A 199-amino-acid chain; its full sequence is Protein GrpE (199 aa).

The segment at 20–52 (YKVENEILEEETDEESQHQEPALGHPSYTALEE) is disordered.

Belongs to the GrpE family. Homodimer.

The protein resides in the cytoplasm. In terms of biological role, participates actively in the response to hyperosmotic and heat shock by preventing the aggregation of stress-denatured proteins, in association with DnaK and GrpE. It is the nucleotide exchange factor for DnaK and may function as a thermosensor. Unfolded proteins bind initially to DnaJ; upon interaction with the DnaJ-bound protein, DnaK hydrolyzes its bound ATP, resulting in the formation of a stable complex. GrpE releases ADP from DnaK; ATP binding to DnaK triggers the release of the substrate protein, thus completing the reaction cycle. Several rounds of ATP-dependent interactions between DnaJ, DnaK and GrpE are required for fully efficient folding. This is Protein GrpE from Legionella pneumophila (strain Corby).